The sequence spans 146 residues: Heat-stable 19 kDa antigen (146 aa).

An N-terminal signal peptide occupies residues 1-20 (MKFSLLSAIAAAVFVPFTSA).

The protein belongs to the cerato-platanin family. Glycosylated.

The protein resides in the secreted. The chain is Heat-stable 19 kDa antigen (CSA) from Coccidioides posadasii (strain C735) (Valley fever fungus).